A 429-amino-acid chain; its full sequence is Glutamate-1-semialdehyde 2,1-aminomutase (429 aa).

Lys-265 is subject to N6-(pyridoxal phosphate)lysine.

This sequence belongs to the class-III pyridoxal-phosphate-dependent aminotransferase family. HemL subfamily. Homodimer. The cofactor is pyridoxal 5'-phosphate.

Its subcellular location is the cytoplasm. The catalysed reaction is (S)-4-amino-5-oxopentanoate = 5-aminolevulinate. It functions in the pathway porphyrin-containing compound metabolism; protoporphyrin-IX biosynthesis; 5-aminolevulinate from L-glutamyl-tRNA(Glu): step 2/2. In Shewanella halifaxensis (strain HAW-EB4), this protein is Glutamate-1-semialdehyde 2,1-aminomutase.